The following is a 281-amino-acid chain: NADPH-dependent 7-cyano-7-deazaguanine reductase (281 aa).

A substrate-binding site is contributed by 87 to 89 (IES). Residue 89–90 (SK) participates in NADPH binding. The active-site Thioimide intermediate is cysteine 188. Aspartate 195 acts as the Proton donor in catalysis. A substrate-binding site is contributed by 227 to 228 (HE). 256 to 257 (RG) is an NADPH binding site. Residues 261–281 (INPYRSTEQAKPDHNHRMARQ) are disordered. Over residues 268 to 281 (EQAKPDHNHRMARQ) the composition is skewed to basic and acidic residues.

It belongs to the GTP cyclohydrolase I family. QueF type 2 subfamily. As to quaternary structure, homodimer.

The protein resides in the cytoplasm. The enzyme catalyses 7-aminomethyl-7-carbaguanine + 2 NADP(+) = 7-cyano-7-deazaguanine + 2 NADPH + 3 H(+). The protein operates within tRNA modification; tRNA-queuosine biosynthesis. Catalyzes the NADPH-dependent reduction of 7-cyano-7-deazaguanine (preQ0) to 7-aminomethyl-7-deazaguanine (preQ1). The polypeptide is NADPH-dependent 7-cyano-7-deazaguanine reductase (Vibrio vulnificus (strain YJ016)).